The primary structure comprises 283 residues: Accumulation of dyads protein 2 (283 aa).

The tract at residues 1-41 (MSDKEQTSGNTDLENAPAGYYSSHDNDVNGVAEDERPSHDS) is disordered. Residues 1 to 89 (MSDKEQTSGN…APAPVHKFAN (89 aa)) are Cytoplasmic-facing. Residues 90–110 (PAPLGLSAFALTTFVLSMFNA) traverse the membrane as a helical segment. Residues 111–120 (RAQGITVPNV) are Extracellular-facing. The helical transmembrane segment at 121-141 (VVGCAMFYGGLVQLIAGIWEI) threads the bilayer. The Cytoplasmic portion of the chain corresponds to 142–151 (ALENTFGGTA). The chain crosses the membrane as a helical span at residues 152–172 (LCSYGGFWLSFAAIYIPWFGI). Residues 173 to 185 (LEAYEDNESDLNN) lie on the Extracellular side of the membrane. Residues 186–206 (ALGFYLLGWAIFTFGLTVCTM) form a helical membrane-spanning segment. At 207 to 208 (KS) the chain is on the cytoplasmic side. A helical transmembrane segment spans residues 209-229 (TVMFFLLFFLLALTFLLLSIG). Residues 230 to 240 (HFANRLGVTRA) are Extracellular-facing. A helical membrane pass occupies residues 241 to 261 (GGVLGVVVAFIAWYNAYAGVA). Residues 262 to 283 (TKQNSYVLARPFPLPSTERVIF) are Cytoplasmic-facing.

The protein belongs to the acetate uptake transporter (AceTr) (TC 2.A.96) family.

Its subcellular location is the cell membrane. The protein resides in the vacuole membrane. In terms of biological role, transporter protein required for ammonia export and acetate uptake and resistance. Necessary for up-regulation and down-regulation of meiotic plaque (MP) component levels in a dependency on external acetate. Has a role in ascus formation. The chain is Accumulation of dyads protein 2 (ADY2) from Saccharomyces cerevisiae (strain ATCC 204508 / S288c) (Baker's yeast).